Reading from the N-terminus, the 173-residue chain is Archaemetzincin (173 aa).

His130 provides a ligand contact to Zn(2+). The active-site Proton acceptor is Glu131. Zn(2+)-binding residues include His134, His140, Cys141, Cys146, Cys165, and Cys168.

Belongs to the peptidase M54 family. As to quaternary structure, monomer. Zn(2+) is required as a cofactor.

Functionally, probable zinc metalloprotease whose natural substrate is unknown. This is Archaemetzincin from Natronomonas pharaonis (strain ATCC 35678 / DSM 2160 / CIP 103997 / JCM 8858 / NBRC 14720 / NCIMB 2260 / Gabara) (Halobacterium pharaonis).